Reading from the N-terminus, the 288-residue chain is Alpha-acetolactate decarboxylase (288 aa).

The N-terminal stretch at 1 to 23 (MNIKYFLIFLILLAVTSFTLFSG) is a signal peptide.

Belongs to the alpha-acetolactate decarboxylase family.

The enzyme catalyses (2S)-2-acetolactate + H(+) = (R)-acetoin + CO2. The protein operates within polyol metabolism; (R,R)-butane-2,3-diol biosynthesis; (R,R)-butane-2,3-diol from pyruvate: step 2/3. In terms of biological role, converts acetolactate into acetoin. The chain is Alpha-acetolactate decarboxylase from Methanosarcina mazei (strain ATCC BAA-159 / DSM 3647 / Goe1 / Go1 / JCM 11833 / OCM 88) (Methanosarcina frisia).